Consider the following 101-residue polypeptide: Protein RnfH (101 aa).

This sequence belongs to the UPF0125 (RnfH) family.

The chain is Protein RnfH from Pseudomonas aeruginosa (strain UCBPP-PA14).